The sequence spans 379 residues: Nematocin receptor 1 (379 aa).

Topologically, residues histidine 19–methionine 48 are extracellular. Asparagine 32 carries an N-linked (GlcNAc...) asparagine glycan. The chain crosses the membrane as a helical span at residues leucine 49–isoleucine 69. The Cytoplasmic segment spans residues tyrosine 70–aspartate 95. Residues isoleucine 96 to phenylalanine 116 traverse the membrane as a helical segment. At tyrosine 117–lysine 124 the chain is on the extracellular side. An intrachain disulfide couples cysteine 123 to cysteine 196. Residues leucine 125–serine 145 form a helical membrane-spanning segment. The Cytoplasmic portion of the chain corresponds to alanine 146–alanine 168. The chain crosses the membrane as a helical span at residues leucine 169–phenylalanine 189. Over glutamate 190 to glutamine 207 the chain is Extracellular. N-linked (GlcNAc...) asparagine glycosylation is present at asparagine 199. A helical transmembrane segment spans residues leucine 208–leucine 228. The Cytoplasmic segment spans residues tyrosine 229–leucine 289. Residues threonine 290–isoleucine 310 form a helical membrane-spanning segment. The Extracellular portion of the chain corresponds to aspartate 311 to serine 320. Residue asparagine 319 is glycosylated (N-linked (GlcNAc...) asparagine). Residues threonine 321–histidine 343 traverse the membrane as a helical segment. Topologically, residues phenylalanine 344 to phenylalanine 379 are cytoplasmic.

The protein belongs to the G-protein coupled receptor 1 family. Vasopressin/oxytocin receptor subfamily. Detected in the left ASE gustatory neuron, the chemosensory neuron pairs ASH and ADF, and the PQR tail neuron. In males, detected in hook and tail sensory neurons involved in vulval sensing and hermaphrodite contact, and in spicule protractor muscles.

Its subcellular location is the cell membrane. Its function is as follows. Receptor for nematocin. The activity of this receptor is mediated by G proteins which activate a phosphatidylinositol-calcium second messenger system. The activity of this receptor may be modulated by ntr-2, leading to reduced intracellular cAMP production. Plays a role in gustatory associative learning. Also plays a role in male mating behavior. This is Nematocin receptor 1 from Caenorhabditis elegans.